The primary structure comprises 1003 residues: Translation initiation factor IF-2 (1003 aa).

Composition is skewed to basic and acidic residues over residues 61–74, 139–169, 180–206, 219–229, and 252–290; these read EKFS…DRNK, PVVE…KKPE, LEEK…KETP, VFKIRPTEFKS, and SKEE…DKIS. Disordered stretches follow at residues 61-81 and 135-362; these read EKFS…SIEG and PKAE…KDRF. Low complexity predominate over residues 315 to 350; the sequence is NAAGTTNAGGASNNNQRNDNANRPNRNNNSKPNGNN. Residues 502 to 672 enclose the tr-type G domain; it reads PRAPIVTVMG…LLEAEMLDLK (171 aa). The tract at residues 511–518 is G1; it reads GHVDHGKT. Position 511–518 (511–518) interacts with GTP; it reads GHVDHGKT. A G2 region spans residues 536-540; sequence GITQH. Residues 558-561 form a G3 region; sequence DTPG. Residues 558–562 and 612–615 each bind GTP; these read DTPGH and NKVD. The segment at 612–615 is G4; it reads NKVD. The interval 648–650 is G5; the sequence is SAK.

It belongs to the TRAFAC class translation factor GTPase superfamily. Classic translation factor GTPase family. IF-2 subfamily.

It is found in the cytoplasm. Its function is as follows. One of the essential components for the initiation of protein synthesis. Protects formylmethionyl-tRNA from spontaneous hydrolysis and promotes its binding to the 30S ribosomal subunits. Also involved in the hydrolysis of GTP during the formation of the 70S ribosomal complex. The polypeptide is Translation initiation factor IF-2 (Phocaeicola vulgatus (strain ATCC 8482 / DSM 1447 / JCM 5826 / CCUG 4940 / NBRC 14291 / NCTC 11154) (Bacteroides vulgatus)).